Reading from the N-terminus, the 354-residue chain is Probable trehalose-phosphate phosphatase E (354 aa).

Belongs to the trehalose phosphatase family. It depends on a divalent metal cation as a cofactor.

It carries out the reaction alpha,alpha-trehalose 6-phosphate + H2O = alpha,alpha-trehalose + phosphate. The protein operates within glycan biosynthesis; trehalose biosynthesis. Its function is as follows. Removes the phosphate from trehalose 6-phosphate to produce free trehalose. Trehalose accumulation in plant may improve abiotic stress tolerance. This is Probable trehalose-phosphate phosphatase E (TPPE) from Arabidopsis thaliana (Mouse-ear cress).